Consider the following 106-residue polypeptide: Protein Rev (106 aa).

The segment at 8–16 (LIKFLYQSN) is homomultimerization. A disordered region spans residues 14–39 (QSNPPPKPEGTRQARRNRRRRWRERQ). Residues 24–40 (TRQARRNRRRRWRERQR) carry the Nuclear localization signal and RNA-binding (RRE) motif. Over residues 26-37 (QARRNRRRRWRE) the composition is skewed to basic residues. The Nuclear export signal and binding to XPO1 signature appears at 63–74 (LQLPPLERLTLD). 2 positions are modified to phosphoserine; by host: Ser82 and Ser89. The interval 82 to 106 (SGTQGVGSPQILVESPTVLESGTKE) is disordered.

Belongs to the HIV-1 REV protein family. As to quaternary structure, homomultimer; when bound to the RRE. Multimeric assembly is essential for activity and may involve XPO1. Binds to human KPNB1, XPO1, TNPO1, RANBP5 and IPO7. Interacts with the viral Integrase. Interacts with human KHDRBS1. Interacts with human NAP1; this interaction decreases Rev multimerization and stimulates its activity. Interacts with human DEAD-box helicases DDX3 and DDX24; these interactions may serve for viral RNA export to the cytoplasm and packaging, respectively. Interacts with human PSIP1; this interaction may inhibit HIV-1 DNA integration by promoting dissociation of the Integrase-LEDGF/p75 complex. In terms of processing, asymmetrically arginine dimethylated at one site by host PRMT6. Methylation impairs the RNA-binding activity and export of viral RNA from the nucleus to the cytoplasm. Phosphorylated by protein kinase CK2. Presence of, and maybe binding to the N-terminus of the regulatory beta subunit of CK2 is necessary for CK2-mediated Rev's phosphorylation.

Its subcellular location is the host nucleus. It is found in the host nucleolus. The protein resides in the host cytoplasm. Escorts unspliced or incompletely spliced viral pre-mRNAs (late transcripts) out of the nucleus of infected cells. These pre-mRNAs carry a recognition sequence called Rev responsive element (RRE) located in the env gene, that is not present in fully spliced viral mRNAs (early transcripts). This function is essential since most viral proteins are translated from unspliced or partially spliced pre-mRNAs which cannot exit the nucleus by the pathway used by fully processed cellular mRNAs. Rev itself is translated from a fully spliced mRNA that readily exits the nucleus. Rev's nuclear localization signal (NLS) binds directly to KPNB1/Importin beta-1 without previous binding to KPNA1/Importin alpha-1. KPNB1 binds to the GDP bound form of RAN (Ran-GDP) and targets Rev to the nucleus. In the nucleus, the conversion from Ran-GDP to Ran-GTP dissociates Rev from KPNB1 and allows Rev's binding to the RRE in viral pre-mRNAs. Rev multimerization on the RRE via cooperative assembly exposes its nuclear export signal (NES) to the surface. Rev can then form a complex with XPO1/CRM1 and Ran-GTP, leading to nuclear export of the complex. Conversion from Ran-GTP to Ran-GDP mediates dissociation of the Rev/RRE/XPO1/RAN complex, so that Rev can return to the nucleus for a subsequent round of export. Beside KPNB1, also seems to interact with TNPO1/Transportin-1, RANBP5/IPO5 and IPO7/RANBP7 for nuclear import. The nucleoporin-like HRB/RIP is an essential cofactor that probably indirectly interacts with Rev to release HIV RNAs from the perinuclear region to the cytoplasm. The sequence is that of Protein Rev from Homo sapiens (Human).